The sequence spans 547 residues: Signal recognition particle receptor subunit alpha homolog (547 aa).

The segment at 124 to 174 (LENETDTKSLPVEANNDNSARKKNEYEMKKKGAQSKQTNAPKKGKKQLRKW) is disordered. The segment covering 142-153 (SARKKNEYEMKK) has biased composition (basic and acidic residues). An NG domain region spans residues 343 to 546 (YTISLIGVNG…SVDWVVDQLM (204 aa)). GTP contacts are provided by residues 349–356 (GVNGVGKS), 437–441 (DTAGR), and 498–501 (SKVD).

This sequence belongs to the GTP-binding SRP family. Heterodimer of an alpha and a beta chain.

It is found in the endoplasmic reticulum membrane. Functionally, component of the SRP (signal recognition particle) receptor (SR). Ensures, in conjunction with the signal recognition particle, the correct targeting of the nascent secretory proteins to the endoplasmic reticulum membrane system. GTP hydrolysis may enhance the fidelity of and provide unidirectionality to the targeting reaction. This is Signal recognition particle receptor subunit alpha homolog (srp101) from Schizosaccharomyces pombe (strain 972 / ATCC 24843) (Fission yeast).